A 1049-amino-acid chain; its full sequence is MIVEVPGQYNPKNVEDEVREFWHREDTYHKVRRLRSGGRRFFFVDGPPYTTGRIHLGTAWNKVIKDSILRYMSMRGYDLKDRAGWDMHGLPIEVKVEEHLGFRSKRDIESYGVDRFIEQCKSFALRQKDEMTEQFKSLGVWLDWDNPYMTLKNEYIEAAWWTLKRAHERGLLERGLRVVNWCPRCQTAIADSEVEYWDESDPSIYVKFPVEGEDNTYIVIWTTTPWTIPANVAVAVHKDFMYSKVRAWRRDGTYEILIMATDLIENVLKQGRYVDYEILESMRGEDLLSLTYKNPLQDLVPAQRDIVHRVHLADFVTAENTGIVHIAPGHGLEDYELGLEKRLPIFCPVGEDGRYTSEAGKKYEGKYVRDANPEVVEDLMERGALLASGELVHRYGHCWRCKTPIIFIATRQWFIGISELRDQMLKEIERVSWYPDWAGSARFKDWISNARDWCISRQRYWGIPLPIWICRSCGAMDVIGTAAELEARAGRPVEDLHRPAVDDVRLRCSCGGAMERVPDVFDVWFDSAVASWATLNFPRDEEEFRVWWPADFITEGHDQTRGWFYSQLGASMVAFGRAPYKSVLMHGFTLDEQGRKMSKSIGNVVHPEDVVERYGADTLRFYVLSSNAPWEDLHFSWEGAMNVNRMLNILWNAYRFPLPYMVLDRFDISKADTSKYDLRPEDRWIISRVNSLAKEIEENMSGYMLHRATRSLQEFVLEDLSRWYIQLVRPRTWIETEDPDKLAAYATLYNVMSTLVKLMAPFTPFLAESIYQNLVRGLDPSAPESVHMCDWPGYREDLIDKGLEESMSYVREISEAAANARQKGGRKLRWPVSRIIIASDEQLDLRDLLHVLRTQTNSKEVIILPPGEKPEMNLEISVVQKKIGPVFKGESRDVVEALTSMNPKEVKRIIESGEPLEWKGRSYMITEEMVEFREIPPANLIPAEFSKGTVYVDVSLTDELRAEGYAREIIRRIQDMRKDLDLKVDEMIRVSVALNSNEVVDLVSGWRDYISSEVRATLLRIGNDLDLEGELTKDWEVDGVKIRVSVARA.

Residues 48-58 carry the 'HIGH' region motif; the sequence is PYTTGRIHLGT. Positions 596–600 match the 'KMSKS' region motif; the sequence is KMSKS. K599 contributes to the ATP binding site.

Belongs to the class-I aminoacyl-tRNA synthetase family. IleS type 2 subfamily. In terms of assembly, monomer. Zn(2+) serves as cofactor.

Its subcellular location is the cytoplasm. The enzyme catalyses tRNA(Ile) + L-isoleucine + ATP = L-isoleucyl-tRNA(Ile) + AMP + diphosphate. Its function is as follows. Catalyzes the attachment of isoleucine to tRNA(Ile). As IleRS can inadvertently accommodate and process structurally similar amino acids such as valine, to avoid such errors it has two additional distinct tRNA(Ile)-dependent editing activities. One activity is designated as 'pretransfer' editing and involves the hydrolysis of activated Val-AMP. The other activity is designated 'posttransfer' editing and involves deacylation of mischarged Val-tRNA(Ile). In Methanothrix thermoacetophila (strain DSM 6194 / JCM 14653 / NBRC 101360 / PT) (Methanosaeta thermophila), this protein is Isoleucine--tRNA ligase.